Here is a 121-residue protein sequence, read N- to C-terminus: Chronic lymphocytic leukemia up-regulated protein 1 (121 aa).

As to expression, specifically expressed in chronic lymphocytic leukemia (CLL) cells from patients without immunoglobulin heavy-chain hypermutations. Expression is detected in all CLL cells and levels are similar in patients before and after treatment.

It is found in the cytoplasm. This Homo sapiens (Human) protein is Chronic lymphocytic leukemia up-regulated protein 1 (CLLU1).